The chain runs to 575 residues: Serine/threonine-protein phosphatase 2A regulatory subunit B'' subunit beta (575 aa).

A disordered region spans residues 41 to 131; that stretch reads APGRDQPTPG…SQSIPTFYFP (91 aa). In terms of domain architecture, EF-hand spans 388–423; it reads KTPTSIEYWFRCMDLDGDGALSMFELEYFYEEQCRR. The Ca(2+) site is built by Asp-401, Asp-403, Asp-405, and Glu-412.

In terms of assembly, PP2A consists of a common heterodimeric core enzyme, composed of a 36 kDa catalytic subunit (subunit C) and a 65 kDa constant regulatory subunit (PR65 or subunit A), that associates with a variety of regulatory subunits. Proteins that associate with the core dimer include three families of regulatory subunits B (the R2/B/PR55/B55, R3/B''/PR72/PR130/PR59 and R5/B'/B56 families), the 48 kDa variable regulatory subunit, viral proteins, and cell signaling molecules. Interacts with N-terminal region of CDC6. Interacts with NOD2.

The protein localises to the nucleus. In terms of biological role, the B regulatory subunit might modulate substrate selectivity and catalytic activity, and might also direct the localization of the catalytic enzyme to a particular subcellular compartment. This Homo sapiens (Human) protein is Serine/threonine-protein phosphatase 2A regulatory subunit B'' subunit beta (PPP2R3B).